Consider the following 160-residue polypeptide: Secreted RxLR effector protein RXLR-C11 (160 aa).

The N-terminal stretch at 1–19 (MHFSLVLLVFAAIVIPICA) is a signal peptide. The short motif at 58 to 75 (RLLRMNDKAVISDHEEER) is the RxLR-dEER element.

The protein belongs to the RxLR effector family.

It localises to the secreted. It is found in the host cell membrane. Its subcellular location is the host nucleus. Functionally, secreted effector that suppresses pattern-triggered immunity (PTI) in plant host. The chain is Secreted RxLR effector protein RXLR-C11 from Plasmopara halstedii (Downy mildew of sunflower).